The primary structure comprises 446 residues: Tubulin beta-6 chain (446 aa).

The short motif at 1–4 is the MREI motif element; sequence MREI. GTP-binding residues include Q11, E69, S138, G142, T143, G144, N204, and N226. Residue E69 participates in Mg(2+) binding. Residues 419–446 form a disordered region; it reads VSEYQQYQDATADVEEYEEAEASPEKET. Residues 430 to 440 are compositionally biased toward acidic residues; the sequence is ADVEEYEEAEA.

It belongs to the tubulin family. As to quaternary structure, dimer of alpha and beta chains. A typical microtubule is a hollow water-filled tube with an outer diameter of 25 nm and an inner diameter of 15 nM. Alpha-beta heterodimers associate head-to-tail to form protofilaments running lengthwise along the microtubule wall with the beta-tubulin subunit facing the microtubule plus end conferring a structural polarity. Microtubules usually have 13 protofilaments but different protofilament numbers can be found in some organisms and specialized cells. It depends on Mg(2+) as a cofactor. In terms of processing, some glutamate residues at the C-terminus are polyglycylated, resulting in polyglycine chains on the gamma-carboxyl group. Glycylation is mainly limited to tubulin incorporated into axonemes (cilia and flagella) whereas glutamylation is prevalent in neuronal cells, centrioles, axonemes, and the mitotic spindle. Both modifications can coexist on the same protein on adjacent residues, and lowering polyglycylation levels increases polyglutamylation, and reciprocally. The precise function of polyglycylation is still unclear. Post-translationally, some glutamate residues at the C-terminus are polyglutamylated, resulting in polyglutamate chains on the gamma-carboxyl group. Polyglutamylation plays a key role in microtubule severing by spastin (SPAST). SPAST preferentially recognizes and acts on microtubules decorated with short polyglutamate tails: severing activity by SPAST increases as the number of glutamates per tubulin rises from one to eight, but decreases beyond this glutamylation threshold. As to expression, highly expressed in bone marrow.

The protein resides in the cytoplasm. Its subcellular location is the cytoskeleton. Its function is as follows. Tubulin is the major constituent of microtubules, a cylinder consisting of laterally associated linear protofilaments composed of alpha- and beta-tubulin heterodimers. Microtubules grow by the addition of GTP-tubulin dimers to the microtubule end, where a stabilizing cap forms. Below the cap, tubulin dimers are in GDP-bound state, owing to GTPase activity of alpha-tubulin. This is Tubulin beta-6 chain from Gallus gallus (Chicken).